The primary structure comprises 209 residues: SelT-like protein (209 aa).

Residues 1 to 22 (MDKTQLILLGLPIFLLCSDLFN) form the signal peptide. C64 and C67 are oxidised to a cystine.

This sequence belongs to the SelWTH family. SELT subfamily.

The chain is SelT-like protein from Arabidopsis thaliana (Mouse-ear cress).